Here is a 317-residue protein sequence, read N- to C-terminus: Acetyl-coenzyme A carboxylase carboxyl transferase subunit alpha (317 aa).

In terms of domain architecture, CoA carboxyltransferase C-terminal spans 43 to 293; that stretch reads RVRESMADIY…GDVISNALGE (251 aa).

Belongs to the AccA family. In terms of assembly, acetyl-CoA carboxylase is a heterohexamer composed of biotin carboxyl carrier protein (AccB), biotin carboxylase (AccC) and two subunits each of ACCase subunit alpha (AccA) and ACCase subunit beta (AccD).

It localises to the cytoplasm. It catalyses the reaction N(6)-carboxybiotinyl-L-lysyl-[protein] + acetyl-CoA = N(6)-biotinyl-L-lysyl-[protein] + malonyl-CoA. Its pathway is lipid metabolism; malonyl-CoA biosynthesis; malonyl-CoA from acetyl-CoA: step 1/1. Its function is as follows. Component of the acetyl coenzyme A carboxylase (ACC) complex. First, biotin carboxylase catalyzes the carboxylation of biotin on its carrier protein (BCCP) and then the CO(2) group is transferred by the carboxyltransferase to acetyl-CoA to form malonyl-CoA. The protein is Acetyl-coenzyme A carboxylase carboxyl transferase subunit alpha of Rhizobium rhizogenes (strain K84 / ATCC BAA-868) (Agrobacterium radiobacter).